The chain runs to 378 residues: Probable E3 ubiquitin-protein ligase LUL3 (378 aa).

Residues 1–21 show a composition bias toward basic residues; the sequence is MGISLSKRRRDNNNNHHHPHH. The segment at 1 to 79 is disordered; it reads MGISLSKRRR…PPSQISYRPY (79 aa). Residue G2 is the site of N-myristoyl glycine attachment. 2 stretches are compositionally biased toward pro residues: residues 29-38 and 55-72; these read DPPPQQPPPQ and SLPP…PPPS. The tract at residues 164–283 is DAR2 domain; the sequence is FVFDALFDGS…GSFKVKVMKQ (120 aa). An RING-type; atypical zinc finger spans residues 321 to 360; it reads CVICLTEPKDTAVMPCRHLCLCSDCAEELRFQTNKCPICR.

It belongs to the RING-type zinc finger family. LOG2 subfamily. Myristoylated (in vitro).

The catalysed reaction is S-ubiquitinyl-[E2 ubiquitin-conjugating enzyme]-L-cysteine + [acceptor protein]-L-lysine = [E2 ubiquitin-conjugating enzyme]-L-cysteine + N(6)-ubiquitinyl-[acceptor protein]-L-lysine.. It participates in protein modification; protein ubiquitination. Acts as an E3 ubiquitin-protein ligase, or as part of E3 complex, which accepts ubiquitin from specific E2 ubiquitin-conjugating enzymes and then transfers it to substrates (in vitro). The sequence is that of Probable E3 ubiquitin-protein ligase LUL3 (LUL3) from Arabidopsis thaliana (Mouse-ear cress).